Here is an 81-residue protein sequence, read N- to C-terminus: ATP synthase subunit c, chloroplastic (81 aa).

Helical transmembrane passes span 3 to 23 (PLIS…ASIG) and 53 to 73 (LLLS…VALA).

Belongs to the ATPase C chain family. In terms of assembly, F-type ATPases have 2 components, F(1) - the catalytic core - and F(0) - the membrane proton channel. F(1) has five subunits: alpha(3), beta(3), gamma(1), delta(1), epsilon(1). F(0) has four main subunits: a(1), b(1), b'(1) and c(10-14). The alpha and beta chains form an alternating ring which encloses part of the gamma chain. F(1) is attached to F(0) by a central stalk formed by the gamma and epsilon chains, while a peripheral stalk is formed by the delta, b and b' chains.

It localises to the plastid. Its subcellular location is the chloroplast thylakoid membrane. In terms of biological role, f(1)F(0) ATP synthase produces ATP from ADP in the presence of a proton or sodium gradient. F-type ATPases consist of two structural domains, F(1) containing the extramembraneous catalytic core and F(0) containing the membrane proton channel, linked together by a central stalk and a peripheral stalk. During catalysis, ATP synthesis in the catalytic domain of F(1) is coupled via a rotary mechanism of the central stalk subunits to proton translocation. Key component of the F(0) channel; it plays a direct role in translocation across the membrane. A homomeric c-ring of between 10-14 subunits forms the central stalk rotor element with the F(1) delta and epsilon subunits. This chain is ATP synthase subunit c, chloroplastic, found in Angiopteris evecta (Mule's foot fern).